Here is a 169-residue protein sequence, read N- to C-terminus: X polypeptide (169 aa).

It belongs to the IagB/IpgF/P19 family.

The chain is X polypeptide (X) from Escherichia coli.